The following is a 581-amino-acid chain: MTETHHAPLPDVYPSSKQPTSSTYSKCKKFGLPLIGLLTLLLAYISSFTKPVPNSTFDVPASPQCKKPQVYRPSFNKSVNLILNDKQFKIDSIRKLSGAIQIPTEISDTNPLPNDDPEYYSEFFKLHKYFEETFPLVHSHLKVEKVNQLGLLYTWEGTDPSLKPILFMAHQDVVPVNREIWDSWQYPPLSGHYDQETDYVWGRGSNDCKNLMLAELEGIEQLLADGYQTERTVILSLGFDEESSGFMGAKVLAPFLLERYGPDSMFSIIDEGAGLLRLDKNLYIAAAVNAEKGYVDVRISIHGHGGHSSVQPDHTTIGVASELIYMMENHPFDYNFSLDNPIYDVLQCAAEHSGFLPPHVREAILKAPVDEGKRKVLTEFAASHPDIRDLIRTTRAVDVINGGVKANALPGLTSFIVNHRVDIHSSVNETVENDLYWARVIAEKHGYGLTFHDEIIIPETKLGHISLASEKMLEPAPVSPTSGHVWEIFAGTVQNLFQNEILAEQKDADVYVTGGLFSGNTDTKYYWGLSKNIYRFVAGIFPFDQLRTIHSVNEHISASSHVSAVAFVYEYIVNVNEYGHD.

Topologically, residues 1–29 are cytoplasmic; it reads MTETHHAPLPDVYPSSKQPTSSTYSKCKK. Lysine 17 participates in a covalent cross-link: Glycyl lysine isopeptide (Lys-Gly) (interchain with G-Cter in ubiquitin). Residues 30–46 traverse the membrane as a helical; Signal-anchor for type II membrane protein segment; the sequence is FGLPLIGLLTLLLAYIS. The Extracellular segment spans residues 47–581; the sequence is SFTKPVPNST…IVNVNEYGHD (535 aa). Residues asparagine 54 and asparagine 76 are each glycosylated (N-linked (GlcNAc...) asparagine). Histidine 170 lines the Zn(2+) pocket. Aspartate 172 is a catalytic residue. Aspartate 207 contacts Zn(2+). Catalysis depends on glutamate 241, which acts as the Proton acceptor. Zn(2+) is bound by residues glutamate 242 and aspartate 270. Residues asparagine 335 and asparagine 428 are each glycosylated (N-linked (GlcNAc...) asparagine). Histidine 550 contacts Zn(2+).

Belongs to the peptidase M20A family. The cofactor is Zn(2+).

The protein resides in the membrane. The polypeptide is Putative carboxypeptidase YOL153C (Saccharomyces cerevisiae (strain ATCC 204508 / S288c) (Baker's yeast)).